Here is a 398-residue protein sequence, read N- to C-terminus: MANYLTAKLPGIGGSIKTCPDDFLVEELPLYPTCGEGEHLYLEVEKRGMTTFELLKRLSRALQVNERAMGYAGLKDAQATTRQFISVTDCSAEQALALQLQDIRILSARRHRNKLRLGHLAGNRFTITIRDIDSDALEKARDILHVLQMTGVPNFFGEQRYGALGNSHLIGQAIVQKNFSQAAAHIIGDPDKIIHPEWRQGAILYAENRLEEAEQALPRRMRNERNLVRSLRQGRSAEKAVRRLPGKLLRLYLSAYQSHLFDRLVSMRLESLETLWTGDIAYKHDNGACFLVTDAALEQPRADRFEISPTAPLFGHKVMMAEAQAGILEQALLAKEGITPDDFRLGAGLSMPGERRPLRIPISETASNQQGNELELSFSLPKGSFATTVLHEVMKTDV.

Catalysis depends on Asp-76, which acts as the Nucleophile. Residues 151–360 (GVPNFFGEQR…MPGERRPLRI (210 aa)) form the TRUD domain.

It belongs to the pseudouridine synthase TruD family.

It carries out the reaction uridine(13) in tRNA = pseudouridine(13) in tRNA. Functionally, responsible for synthesis of pseudouridine from uracil-13 in transfer RNAs. The chain is tRNA pseudouridine synthase D from Syntrophotalea carbinolica (strain DSM 2380 / NBRC 103641 / GraBd1) (Pelobacter carbinolicus).